The primary structure comprises 234 residues: UPF0173 metal-dependent hydrolase RHE_CH01853 (234 aa).

It belongs to the UPF0173 family.

The chain is UPF0173 metal-dependent hydrolase RHE_CH01853 from Rhizobium etli (strain ATCC 51251 / DSM 11541 / JCM 21823 / NBRC 15573 / CFN 42).